Here is a 197-residue protein sequence, read N- to C-terminus: Glycerol-3-phosphate acyltransferase (197 aa).

5 helical membrane-spanning segments follow: residues 1-21 (MNIL…GFLI), 78-98 (LIEV…IWLG), 111-131 (MFLA…LIVL), 136-155 (FVSL…MFFY), and 159-176 (FIHT…LVIW).

It belongs to the PlsY family. In terms of assembly, probably interacts with PlsX.

The protein localises to the cell inner membrane. The catalysed reaction is an acyl phosphate + sn-glycerol 3-phosphate = a 1-acyl-sn-glycero-3-phosphate + phosphate. It participates in lipid metabolism; phospholipid metabolism. In terms of biological role, catalyzes the transfer of an acyl group from acyl-phosphate (acyl-PO(4)) to glycerol-3-phosphate (G3P) to form lysophosphatidic acid (LPA). This enzyme utilizes acyl-phosphate as fatty acyl donor, but not acyl-CoA or acyl-ACP. This chain is Glycerol-3-phosphate acyltransferase, found in Prochlorococcus marinus (strain MIT 9215).